A 129-amino-acid chain; its full sequence is L-ectoine synthase (129 aa).

The protein belongs to the ectoine synthase family.

The enzyme catalyses (2S)-4-acetamido-2-aminobutanoate = L-ectoine + H2O. It participates in amine and polyamine biosynthesis; ectoine biosynthesis; L-ectoine from L-aspartate 4-semialdehyde: step 3/3. Functionally, catalyzes the circularization of gamma-N-acetyl-alpha,gamma-diaminobutyric acid (ADABA) to ectoine (1,4,5,6-tetrahydro-2-methyl-4-pyrimidine carboxylic acid), which is an excellent osmoprotectant. The polypeptide is L-ectoine synthase (Marinomonas sp. (strain MWYL1)).